Here is a 179-residue protein sequence, read N- to C-terminus: Adenine phosphoribosyltransferase (179 aa).

This sequence belongs to the purine/pyrimidine phosphoribosyltransferase family. As to quaternary structure, homodimer.

It is found in the cytoplasm. It catalyses the reaction AMP + diphosphate = 5-phospho-alpha-D-ribose 1-diphosphate + adenine. It participates in purine metabolism; AMP biosynthesis via salvage pathway; AMP from adenine: step 1/1. Functionally, catalyzes a salvage reaction resulting in the formation of AMP, that is energically less costly than de novo synthesis. This chain is Adenine phosphoribosyltransferase, found in Helicobacter pylori (strain J99 / ATCC 700824) (Campylobacter pylori J99).